Consider the following 314-residue polypeptide: ATP synthase gamma chain (314 aa).

Belongs to the ATPase gamma chain family. In terms of assembly, F-type ATPases have 2 components, CF(1) - the catalytic core - and CF(0) - the membrane proton channel. CF(1) has five subunits: alpha(3), beta(3), gamma(1), delta(1), epsilon(1). CF(0) has three main subunits: a, b and c.

It is found in the cellular thylakoid membrane. In terms of biological role, produces ATP from ADP in the presence of a proton gradient across the membrane. The gamma chain is believed to be important in regulating ATPase activity and the flow of protons through the CF(0) complex. The chain is ATP synthase gamma chain from Rippkaea orientalis (strain PCC 8801 / RF-1) (Cyanothece sp. (strain PCC 8801)).